Consider the following 315-residue polypeptide: Transaldolase (315 aa).

The Schiff-base intermediate with substrate role is filled by Lys125.

This sequence belongs to the transaldolase family. Type 1 subfamily. Homodimer.

The protein resides in the cytoplasm. It carries out the reaction D-sedoheptulose 7-phosphate + D-glyceraldehyde 3-phosphate = D-erythrose 4-phosphate + beta-D-fructose 6-phosphate. It functions in the pathway carbohydrate degradation; pentose phosphate pathway; D-glyceraldehyde 3-phosphate and beta-D-fructose 6-phosphate from D-ribose 5-phosphate and D-xylulose 5-phosphate (non-oxidative stage): step 2/3. Its function is as follows. Transaldolase is important for the balance of metabolites in the pentose-phosphate pathway. In Polaromonas sp. (strain JS666 / ATCC BAA-500), this protein is Transaldolase.